Reading from the N-terminus, the 408-residue chain is Multidrug resistance protein MdtG (408 aa).

A run of 10 helical transmembrane segments spans residues Leu16 to Phe36, Ile58 to Ala78, Leu92 to Ile112, Ala115 to Val135, Thr146 to Ala166, Pro173 to Ile193, Ile221 to Ile241, Val256 to Pro276, Ile290 to Thr310, and Ala378 to Leu398.

Belongs to the major facilitator superfamily. DHA1 family. MdtG (TC 2.A.1.2.20) subfamily.

It is found in the cell inner membrane. Its function is as follows. Confers resistance to fosfomycin and deoxycholate. The polypeptide is Multidrug resistance protein MdtG (Escherichia coli (strain SMS-3-5 / SECEC)).